Consider the following 114-residue polypeptide: Replication initiation control protein YabA (114 aa).

4 residues coordinate Zn(2+): histidine 84, cysteine 86, cysteine 102, and cysteine 105.

It belongs to the YabA family. In terms of assembly, homotetramer. Interacts with both DnaA and DnaN, acting as a bridge between these two proteins. Zn(2+) is required as a cofactor.

The protein localises to the cytoplasm. The protein resides in the nucleoid. Its function is as follows. Involved in control of chromosome replication initiation. Inhibits the cooperative binding of DnaA to the oriC region, thus negatively regulating initiation of chromosome replication. Inhibits the ability of DnaA-ATP to form a helix on DNA; does not disassemble preformed DnaA-DNA helices. Decreases the residence time of DnaA on the chromosome at its binding sites (oriC, replication forks and promoter-binding sites). Tethers DnaA to the replication machinery via the DNA polymerase beta sliding clamp subunit (dnaN). Associates with oriC and other DnaA targets on the chromosome in a DnaA-dependent manner. The polypeptide is Replication initiation control protein YabA (Ligilactobacillus salivarius (strain UCC118) (Lactobacillus salivarius)).